The sequence spans 206 residues: Ribosomal RNA large subunit methyltransferase E (206 aa).

The S-adenosyl-L-methionine site is built by Gly-60, Trp-62, Asp-80, Asn-96, and Asp-121. The active-site Proton acceptor is Lys-161.

The protein belongs to the class I-like SAM-binding methyltransferase superfamily. RNA methyltransferase RlmE family.

It localises to the cytoplasm. The catalysed reaction is uridine(2552) in 23S rRNA + S-adenosyl-L-methionine = 2'-O-methyluridine(2552) in 23S rRNA + S-adenosyl-L-homocysteine + H(+). Specifically methylates the uridine in position 2552 of 23S rRNA at the 2'-O position of the ribose in the fully assembled 50S ribosomal subunit. The protein is Ribosomal RNA large subunit methyltransferase E of Francisella philomiragia subsp. philomiragia (strain ATCC 25017 / CCUG 19701 / FSC 153 / O#319-036).